The primary structure comprises 366 residues: Ribosomal RNA large subunit methyltransferase M (366 aa).

S-adenosyl-L-methionine contacts are provided by residues Ser188, 221–224, Asp240, Asp260, and Asp277; that span reads CPGG. The active-site Proton acceptor is Lys306.

This sequence belongs to the class I-like SAM-binding methyltransferase superfamily. RNA methyltransferase RlmE family. RlmM subfamily. Monomer.

The protein localises to the cytoplasm. It catalyses the reaction cytidine(2498) in 23S rRNA + S-adenosyl-L-methionine = 2'-O-methylcytidine(2498) in 23S rRNA + S-adenosyl-L-homocysteine + H(+). Functionally, catalyzes the 2'-O-methylation at nucleotide C2498 in 23S rRNA. The sequence is that of Ribosomal RNA large subunit methyltransferase M from Pectobacterium atrosepticum (strain SCRI 1043 / ATCC BAA-672) (Erwinia carotovora subsp. atroseptica).